Consider the following 78-residue polypeptide: Translational regulator CsrA (78 aa).

Belongs to the CsrA/RsmA family. Homodimer; the beta-strands of each monomer intercalate to form a hydrophobic core, while the alpha-helices form wings that extend away from the core.

It localises to the cytoplasm. In terms of biological role, a translational regulator that binds mRNA to regulate translation initiation and/or mRNA stability. Usually binds in the 5'-UTR at or near the Shine-Dalgarno sequence preventing ribosome-binding, thus repressing translation. Its main target seems to be the major flagellin gene, while its function is anatagonized by FliW. In Desulfovibrio desulfuricans (strain ATCC 27774 / DSM 6949 / MB), this protein is Translational regulator CsrA.